The chain runs to 1224 residues: ATP-dependent helicase/deoxyribonuclease subunit B (1224 aa).

One can recognise a UvrD-like helicase ATP-binding domain in the interval 1-326 (MSLRFILGRA…VCAAANRRSE (326 aa)). 8-15 (GRAGTGKS) is a binding site for ATP. The UvrD-like helicase C-terminal domain maps to 283–584 (QSAPRFQHPE…KLSLIPPELD (302 aa)). [4Fe-4S] cluster contacts are provided by C841, C1176, C1179, and C1185.

It belongs to the helicase family. AddB/RexB type 1 subfamily. In terms of assembly, heterodimer of AddA and AddB. Mg(2+) is required as a cofactor. Requires [4Fe-4S] cluster as cofactor.

In terms of biological role, the heterodimer acts as both an ATP-dependent DNA helicase and an ATP-dependent, dual-direction single-stranded exonuclease. Recognizes the chi site generating a DNA molecule suitable for the initiation of homologous recombination. The AddB subunit has 5' -&gt; 3' nuclease activity but not helicase activity. The sequence is that of ATP-dependent helicase/deoxyribonuclease subunit B from Heliobacterium modesticaldum (strain ATCC 51547 / Ice1).